A 510-amino-acid polypeptide reads, in one-letter code: Bifunctional purine biosynthesis protein PurH (510 aa).

The MGS-like domain maps to 1–144 (MSKRALISVT…KNYKDVIVVV (144 aa)).

Belongs to the PurH family.

It catalyses the reaction (6R)-10-formyltetrahydrofolate + 5-amino-1-(5-phospho-beta-D-ribosyl)imidazole-4-carboxamide = 5-formamido-1-(5-phospho-D-ribosyl)imidazole-4-carboxamide + (6S)-5,6,7,8-tetrahydrofolate. It carries out the reaction IMP + H2O = 5-formamido-1-(5-phospho-D-ribosyl)imidazole-4-carboxamide. The protein operates within purine metabolism; IMP biosynthesis via de novo pathway; 5-formamido-1-(5-phospho-D-ribosyl)imidazole-4-carboxamide from 5-amino-1-(5-phospho-D-ribosyl)imidazole-4-carboxamide (10-formyl THF route): step 1/1. It participates in purine metabolism; IMP biosynthesis via de novo pathway; IMP from 5-formamido-1-(5-phospho-D-ribosyl)imidazole-4-carboxamide: step 1/1. The chain is Bifunctional purine biosynthesis protein PurH from Clostridioides difficile (strain 630) (Peptoclostridium difficile).